A 451-amino-acid polypeptide reads, in one-letter code: Uronate isomerase (451 aa).

Belongs to the metallo-dependent hydrolases superfamily. Uronate isomerase family. Homotrimer.

The catalysed reaction is D-glucuronate = D-fructuronate. It catalyses the reaction aldehydo-D-galacturonate = keto-D-tagaturonate. It functions in the pathway carbohydrate metabolism; pentose and glucuronate interconversion. This Thermotoga maritima (strain ATCC 43589 / DSM 3109 / JCM 10099 / NBRC 100826 / MSB8) protein is Uronate isomerase.